The chain runs to 271 residues: DNA repair protein RecO (271 aa).

This sequence belongs to the RecO family.

Involved in DNA repair and RecF pathway recombination. This chain is DNA repair protein RecO, found in Rhodococcus erythropolis (strain PR4 / NBRC 100887).